The sequence spans 294 residues: Acetyl-coenzyme A carboxylase carboxyl transferase subunit beta (294 aa).

The 265-residue stretch at 30–294 folds into the CoA carboxyltransferase N-terminal domain; the sequence is IMTKCPECKK…PGVGGEVDGE (265 aa). Zn(2+)-binding residues include Cys34, Cys37, Cys53, and Cys56. A C4-type zinc finger spans residues 34–56; it reads CPECKKIMYTKELQKNLMVCNYC.

This sequence belongs to the AccD/PCCB family. In terms of assembly, acetyl-CoA carboxylase is a heterohexamer composed of biotin carboxyl carrier protein (AccB), biotin carboxylase (AccC) and two subunits each of ACCase subunit alpha (AccA) and ACCase subunit beta (AccD). Requires Zn(2+) as cofactor.

It is found in the cytoplasm. The catalysed reaction is N(6)-carboxybiotinyl-L-lysyl-[protein] + acetyl-CoA = N(6)-biotinyl-L-lysyl-[protein] + malonyl-CoA. It functions in the pathway lipid metabolism; malonyl-CoA biosynthesis; malonyl-CoA from acetyl-CoA: step 1/1. Its function is as follows. Component of the acetyl coenzyme A carboxylase (ACC) complex. Biotin carboxylase (BC) catalyzes the carboxylation of biotin on its carrier protein (BCCP) and then the CO(2) group is transferred by the transcarboxylase to acetyl-CoA to form malonyl-CoA. The chain is Acetyl-coenzyme A carboxylase carboxyl transferase subunit beta from Listeria monocytogenes serovar 1/2a (strain ATCC BAA-679 / EGD-e).